The primary structure comprises 71 residues: Small ribosomal subunit protein bS21 (71 aa).

The tract at residues Tyr-38–Tyr-71 is disordered. The segment covering Lys-46–Lys-59 has biased composition (basic residues). Residues Leu-60–Tyr-71 are compositionally biased toward basic and acidic residues.

The protein belongs to the bacterial ribosomal protein bS21 family.

In Hamiltonella defensa subsp. Acyrthosiphon pisum (strain 5AT), this protein is Small ribosomal subunit protein bS21.